A 376-amino-acid chain; its full sequence is Alcohol dehydrogenase 1 (376 aa).

N-acetylserine is present on Ser2. Zn(2+)-binding residues include Cys47, His68, Cys98, Cys101, Cys104, Cys112, and Cys176. Residues 201 to 206 (GLGGVG), Asp225, Lys230, 294 to 296 (VGV), and Arg371 each bind NAD(+).

This sequence belongs to the zinc-containing alcohol dehydrogenase family. Class-I subfamily. Homodimer. Requires Zn(2+) as cofactor.

The protein localises to the cytoplasm. It carries out the reaction a primary alcohol + NAD(+) = an aldehyde + NADH + H(+). The catalysed reaction is a secondary alcohol + NAD(+) = a ketone + NADH + H(+). This Gallus gallus (Chicken) protein is Alcohol dehydrogenase 1 (ADH1).